The following is a 324-amino-acid chain: UDP-N-acetylenolpyruvoylglucosamine reductase (324 aa).

In terms of domain architecture, FAD-binding PCMH-type spans 38–231; the sequence is AGGSARRLYV…SRERIRSLLK (194 aa). Arg-195 is a catalytic residue. Ser-246 acts as the Proton donor in catalysis. Glu-316 is a catalytic residue.

The protein belongs to the MurB family. Requires FAD as cofactor.

Its subcellular location is the cytoplasm. It carries out the reaction UDP-N-acetyl-alpha-D-muramate + NADP(+) = UDP-N-acetyl-3-O-(1-carboxyvinyl)-alpha-D-glucosamine + NADPH + H(+). It functions in the pathway cell wall biogenesis; peptidoglycan biosynthesis. Functionally, cell wall formation. This Thiobacillus denitrificans (strain ATCC 25259 / T1) protein is UDP-N-acetylenolpyruvoylglucosamine reductase.